Consider the following 373-residue polypeptide: Muscleblind-like protein 2 (373 aa).

C3H1-type zinc fingers lie at residues 13–41, 47–73, 176–204, and 212–238; these read WLTL…HPPK, NGRV…HPPT, TDKL…HPAD, and DNTV…HPPA.

This sequence belongs to the muscleblind family. As to quaternary structure, interacts with ITGA3. As to expression, expressed in heart, brain, placenta, lung, liver, skeletal muscle, kidney and pancreas.

It localises to the nucleus. The protein localises to the cytoplasm. Functionally, mediates pre-mRNA alternative splicing regulation. Acts either as activator or repressor of splicing on specific pre-mRNA targets. Inhibits cardiac troponin-T (TNNT2) pre-mRNA exon inclusion but induces insulin receptor (IR) pre-mRNA exon inclusion in muscle. Antagonizes the alternative splicing activity pattern of CELF proteins. RNA-binding protein that binds to 5'ACACCC-3' core sequence, termed zipcode, within the 3'UTR of ITGA3. Binds to CUG triplet repeat expansion in myotonic dystrophy muscle cells by sequestering the target RNAs. Together with RNA binding proteins RBPMS and RBFOX2, activates vascular smooth muscle cells alternative splicing events. Regulates NCOR2 alternative splicing. Seems to regulate expression and localization of ITGA3 by transporting it from the nucleus to cytoplasm at adhesion plaques. May play a role in myotonic dystrophy pathophysiology (DM). This Homo sapiens (Human) protein is Muscleblind-like protein 2 (MBNL2).